A 236-amino-acid polypeptide reads, in one-letter code: Biosynthetic peptidoglycan transglycosylase (236 aa).

The chain crosses the membrane as a helical span at residues 17–37; sequence IVILVALALLALPYLLTILYG.

Belongs to the glycosyltransferase 51 family.

It is found in the cell inner membrane. It carries out the reaction [GlcNAc-(1-&gt;4)-Mur2Ac(oyl-L-Ala-gamma-D-Glu-L-Lys-D-Ala-D-Ala)](n)-di-trans,octa-cis-undecaprenyl diphosphate + beta-D-GlcNAc-(1-&gt;4)-Mur2Ac(oyl-L-Ala-gamma-D-Glu-L-Lys-D-Ala-D-Ala)-di-trans,octa-cis-undecaprenyl diphosphate = [GlcNAc-(1-&gt;4)-Mur2Ac(oyl-L-Ala-gamma-D-Glu-L-Lys-D-Ala-D-Ala)](n+1)-di-trans,octa-cis-undecaprenyl diphosphate + di-trans,octa-cis-undecaprenyl diphosphate + H(+). It functions in the pathway cell wall biogenesis; peptidoglycan biosynthesis. Functionally, peptidoglycan polymerase that catalyzes glycan chain elongation from lipid-linked precursors. This Rhodopseudomonas palustris (strain ATCC BAA-98 / CGA009) protein is Biosynthetic peptidoglycan transglycosylase.